We begin with the raw amino-acid sequence, 230 residues long: Cytochrome c oxidase subunit 2 (230 aa).

Topologically, residues 1–26 are mitochondrial intermembrane; it reads MATPAQLGLMDAASPVMEEMIYFHDH. Residues 27–48 form a helical membrane-spanning segment; that stretch reads VMLVLILITCLIFYSMLVLISS. The Mitochondrial matrix portion of the chain corresponds to 49-62; it reads KYIYRFLTDGHVIE. A helical membrane pass occupies residues 63-82; the sequence is TVWTVIPAIILVVVALPSLK. Over 83–230 the chain is Mitochondrial intermembrane; that stretch reads LLYLTDELDN…GWCDMMLDEE (148 aa). Cu cation contacts are provided by H161, C196, E198, C200, H204, and M207. Residue E198 participates in Mg(2+) binding.

It belongs to the cytochrome c oxidase subunit 2 family. As to quaternary structure, component of the cytochrome c oxidase (complex IV, CIV), a multisubunit enzyme composed of a catalytic core of 3 subunits and several supernumerary subunits. The complex exists as a monomer or a dimer and forms supercomplexes (SCs) in the inner mitochondrial membrane with ubiquinol-cytochrome c oxidoreductase (cytochrome b-c1 complex, complex III, CIII). The cofactor is Cu cation.

Its subcellular location is the mitochondrion inner membrane. It catalyses the reaction 4 Fe(II)-[cytochrome c] + O2 + 8 H(+)(in) = 4 Fe(III)-[cytochrome c] + 2 H2O + 4 H(+)(out). Its function is as follows. Component of the cytochrome c oxidase, the last enzyme in the mitochondrial electron transport chain which drives oxidative phosphorylation. The respiratory chain contains 3 multisubunit complexes succinate dehydrogenase (complex II, CII), ubiquinol-cytochrome c oxidoreductase (cytochrome b-c1 complex, complex III, CIII) and cytochrome c oxidase (complex IV, CIV), that cooperate to transfer electrons derived from NADH and succinate to molecular oxygen, creating an electrochemical gradient over the inner membrane that drives transmembrane transport and the ATP synthase. Cytochrome c oxidase is the component of the respiratory chain that catalyzes the reduction of oxygen to water. Electrons originating from reduced cytochrome c in the intermembrane space (IMS) are transferred via the dinuclear copper A center (CU(A)) of subunit 2 and heme A of subunit 1 to the active site in subunit 1, a binuclear center (BNC) formed by heme A3 and copper B (CU(B)). The BNC reduces molecular oxygen to 2 water molecules using 4 electrons from cytochrome c in the IMS and 4 protons from the mitochondrial matrix. The chain is Cytochrome c oxidase subunit 2 (COII) from Branchiostoma floridae (Florida lancelet).